The sequence spans 593 residues: Pentatricopeptide repeat-containing protein At5g24830 (593 aa).

PPR repeat units follow at residues 120–154 (CLSI…GVIP), 155–189 (GLIT…GPSP), 190–224 (NCVS…GIRP), 225–256 (NRVT…ILDS), 264–298 (DIVI…NVPA), 299–333 (DSVV…GVNP), 334–368 (DVFT…GVAP), 369–403 (DQIS…SLLP), 404–438 (EVLL…GVKP), 439–473 (NVYT…KIHP), 474–508 (DTTT…GCQP), and 509–543 (DIIT…GITI).

This sequence belongs to the PPR family. P subfamily.

In Arabidopsis thaliana (Mouse-ear cress), this protein is Pentatricopeptide repeat-containing protein At5g24830.